We begin with the raw amino-acid sequence, 599 residues long: Stromal 70 kDa heat shock-related protein, chloroplastic (599 aa).

The tract at residues 545 to 573 (NQPGAGGEPGAAQAQHQEQSSARQIQRAK) is disordered. The segment covering 554–568 (GAAQAQHQEQSSARQ) has biased composition (low complexity).

Belongs to the heat shock protein 70 family.

The protein resides in the plastid. Its subcellular location is the chloroplast stroma. Interacts with newly imported chloroplast proteins to assist in their maturation. This chain is Stromal 70 kDa heat shock-related protein, chloroplastic (CHSP70), found in Spinacia oleracea (Spinach).